Here is a 341-residue protein sequence, read N- to C-terminus: MKRSEFYFDLPEELIAQEPLEDRASSRLMILDRRTGEIKHDIFKNITKYLKEGDCLVLNDTKVIPARLIGQREDSGGKVELLLLRRTSMNEWEVLVKPGKRAKVGKRVVFGNGELVAEIIDTTEAGGRIARFYYDGVFEEVLDRLGEMPVPPYIKKKLKDKNRYQTVYAKYEGSAAAPTAGLHFTEELLDEIRNMGVKTVFITLHVGLGTFRPVKEEIIENHKMHEEFYIVTEEAAKAINEARKNGGRIIAVGTTSTRTLETVADESGYIHPKSGWTDIFIYPGYKFKAIDGMITNFHLPESTLIMMVSAFAGKENIMRAYKVAIENKYRFFSFGDAMLII.

Belongs to the QueA family. In terms of assembly, monomer.

It localises to the cytoplasm. The catalysed reaction is 7-aminomethyl-7-carbaguanosine(34) in tRNA + S-adenosyl-L-methionine = epoxyqueuosine(34) in tRNA + adenine + L-methionine + 2 H(+). Its pathway is tRNA modification; tRNA-queuosine biosynthesis. Transfers and isomerizes the ribose moiety from AdoMet to the 7-aminomethyl group of 7-deazaguanine (preQ1-tRNA) to give epoxyqueuosine (oQ-tRNA). This is S-adenosylmethionine:tRNA ribosyltransferase-isomerase from Caldanaerobacter subterraneus subsp. tengcongensis (strain DSM 15242 / JCM 11007 / NBRC 100824 / MB4) (Thermoanaerobacter tengcongensis).